Here is a 231-residue protein sequence, read N- to C-terminus: Regulatory protein VanR (231 aa).

One can recognise a Response regulatory domain in the interval 4–117; the sequence is KILIVDDEHE…ELIARVKAQL (114 aa). Aspartate 53 carries the 4-aspartylphosphate modification. A DNA-binding region (ompR/PhoB-type) is located at residues 131-231; sequence ENVIVHSGLV…VWGVGYKIEK (101 aa).

Monomer. Phosphorylated by VanS. Dephosphorylated by VanS. Can be phosphorylated nonenzymatically by acetyl-phosphate.

It is found in the cytoplasm. Its function is as follows. Member of the two-component regulatory system VanS/VanR. Binds to the promoter regions of target genes, including vanH and vanR; phosphorylation of VanR increases binding affinity to the vanH and vanR promoters significantly. DNA binding may be inhibited by the cognate sensor protein, VanS. Activates the transcription of vanH, vanA and vanX in response to vancomycin which results in vancomycin resistance. Involved in conferring vancomycin resistance. The protein is Regulatory protein VanR (vanR) of Enterococcus faecium (Streptococcus faecium).